Consider the following 799-residue polypeptide: ATP-dependent RNA helicase DBP7 (799 aa).

Disordered stretches follow at residues 34-177 (KALR…RRIR) and 201-229 (DRIAGEDVQMEDEEEEEAENNAESSNAAL). 5 stretches are compositionally biased toward basic and acidic residues: residues 35-49 (ALREEEKKNAWKKEQ), 56-66 (IEDRMKRREQD), 73-100 (KPYDKPYEKKPYEKKPFEKKPYEKKSYD), 114-132 (EKYQRLMEGGKRPEKERWV), and 139-172 (NRRDMEKAGKDQSQDATPKHHDRDVIGTREDGSL). Residues 208-220 (VQMEDEEEEEAEN) show a composition bias toward acidic residues. The short motif at 233–261 (TTFSGLGCSQRLVDALVGMQLAKPTKIQR) is the Q motif element. The Helicase ATP-binding domain occupies 265-465 (PRLIQRERDL…KSTLKDADWV (201 aa)). ATP contacts are provided by residues 278 to 285 (AQTGSGKT) and 306 to 313 (TGLFAVIL). Residues 391–394 (DEGD) carry the DEAD box motif. The Helicase C-terminal domain occupies 511–679 (DILQSSEKTN…NILAAGFGGK (169 aa)). The interval 750 to 799 (KLGKKKDPEKIKVNKDGSLDETQARKKMLDRSRKHVYNSGESAMGGYVLE) is disordered. Positions 754–780 (KKDPEKIKVNKDGSLDETQARKKMLDR) are enriched in basic and acidic residues.

It belongs to the DEAD box helicase family. DDX31/DBP7 subfamily.

Its subcellular location is the nucleus. The protein localises to the nucleolus. It carries out the reaction ATP + H2O = ADP + phosphate + H(+). ATP-binding RNA helicase involved in the biogenesis of 60S ribosomal subunits and is required for the normal formation of 25S and 5.8S rRNAs. In Yarrowia lipolytica (strain CLIB 122 / E 150) (Yeast), this protein is ATP-dependent RNA helicase DBP7 (DBP7).